Consider the following 467-residue polypeptide: Serine/threonine-protein phosphatase 2A 56 kDa regulatory subunit epsilon isoform (467 aa).

A disordered region spans residues 1 to 40; it reads MSSAPTTPPSVDKVDGFSRKSVRKARQKRSQSSSQFRSQG. Position 2 is an N-acetylserine (S2). T7 is modified (phosphothreonine). A compositionally biased stretch (basic residues) spans 20-29; sequence KSVRKARQKR. S30, S32, and S34 each carry phosphoserine. The segment covering 30 to 40 has biased composition (low complexity); sequence SQSSSQFRSQG.

Belongs to the phosphatase 2A regulatory subunit B56 family. Found in a complex with at least ARL2, PPP2CB; PPP2R1A, PPP2R2A, PPP2R5E and TBCD. PP2A consists of a common heterodimeric core enzyme, composed of a 36 kDa catalytic subunit (subunit C) and a 65 kDa constant regulatory subunit (PR65 or subunit A), that associates with a variety of regulatory subunits. Proteins that associate with the core dimer include three families of regulatory subunits B (the R2/B/PR55/B55, R3/B''/PR72/PR130/PR59 and R5/B'/B56 families), the 48 kDa variable regulatory subunit, viral proteins, and cell signaling molecules. Interacts with SGO1. Phosphorylated on serine residues.

It is found in the cytoplasm. In terms of biological role, the B regulatory subunit might modulate substrate selectivity and catalytic activity, and might also direct the localization of the catalytic enzyme to a particular subcellular compartment. The sequence is that of Serine/threonine-protein phosphatase 2A 56 kDa regulatory subunit epsilon isoform (PPP2R5E) from Homo sapiens (Human).